A 122-amino-acid chain; its full sequence is MANQEQIIEAIKEMSVLELNDLVKAIEEEFGVTAAAPVAAAGAAGGGDAAAEKTEFDVELTSAGSSKIKVVKAVKEATGLGLKDAKELVDGAPKVIKEAMPKEDAEKLKEQLEEVGASVELK.

This sequence belongs to the bacterial ribosomal protein bL12 family. As to quaternary structure, homodimer. Part of the ribosomal stalk of the 50S ribosomal subunit. Forms a multimeric L10(L12)X complex, where L10 forms an elongated spine to which 2 to 4 L12 dimers bind in a sequential fashion. Binds GTP-bound translation factors.

Forms part of the ribosomal stalk which helps the ribosome interact with GTP-bound translation factors. Is thus essential for accurate translation. This Staphylococcus epidermidis (strain ATCC 35984 / DSM 28319 / BCRC 17069 / CCUG 31568 / BM 3577 / RP62A) protein is Large ribosomal subunit protein bL12.